The following is a 219-amino-acid chain: Probable octanoyltransferase (219 aa).

The BPL/LPL catalytic domain occupies 43-219; that stretch reads QPPKPTIITS…NNLDSFLMSK (177 aa). Residues 83-90, 151-153, and 164-166 contribute to the substrate site; these read RGGQTTFH, AIG, and GLA. The active-site Acyl-thioester intermediate is the Cys-182.

This sequence belongs to the LipB family.

It carries out the reaction octanoyl-[ACP] + L-lysyl-[protein] = N(6)-octanoyl-L-lysyl-[protein] + holo-[ACP] + H(+). It functions in the pathway protein modification; protein lipoylation via endogenous pathway; protein N(6)-(lipoyl)lysine from octanoyl-[acyl-carrier-protein]: step 1/2. Its function is as follows. Catalyzes the transfer of endogenously produced octanoic acid from octanoyl-acyl-carrier-protein onto the lipoyl domains of lipoate-dependent enzymes. Lipoyl-ACP can also act as a substrate although octanoyl-ACP is likely to be the physiological substrate. This Schizosaccharomyces pombe (strain 972 / ATCC 24843) (Fission yeast) protein is Probable octanoyltransferase.